Here is a 582-residue protein sequence, read N- to C-terminus: Multicopper oxidase LPR1 homolog 1 (582 aa).

A signal peptide spans Met1 to Gly20. His150, His152, His198, and His200 together coordinate Cu cation. Residues Asn256, Asn300, and Asn308 are each glycosylated (N-linked (GlcNAc...) asparagine). Residues Pro285 to Thr354 form the Plastocyanin-like domain. Cu cation-binding residues include His467, His470, and His472. N-linked (GlcNAc...) asparagine glycosylation is present at Asn504. Cu cation-binding residues include His563, Cys564, His565, His569, and Met574.

It belongs to the multicopper oxidase family. The cofactor is Cu cation. Highly expressed in roots, and at lower levels in basal stems and leaf blades.

It localises to the endoplasmic reticulum membrane. Its function is as follows. Multicopper oxidase that may play a role in the maintenance of inorganic phosphate homeostasis. The sequence is that of Multicopper oxidase LPR1 homolog 1 from Oryza sativa subsp. japonica (Rice).